We begin with the raw amino-acid sequence, 142 residues long: Hemoglobin subunit alpha-B (142 aa).

The Globin domain occupies 2 to 142 (VLSPTDKSNV…VSTVLTSKYR (141 aa)). His59 is an O2 binding site. His88 contacts heme b.

It belongs to the globin family. Heterotetramer of two alpha chains and two beta chains. In terms of tissue distribution, red blood cells.

Involved in oxygen transport from the lung to the various peripheral tissues. The polypeptide is Hemoglobin subunit alpha-B (HBAB) (Otolemur crassicaudatus (Brown greater galago)).